Reading from the N-terminus, the 340-residue chain is Peroxisomal coenzyme A diphosphatase 1, peroxisomal (340 aa).

The transit peptide at 1–7 directs the protein to the peroxisome; the sequence is MILSQRR. The 163-residue stretch at 37–199 folds into the Nudix hydrolase domain; sequence KRNSAVIILL…DEDVKSYQAE (163 aa). Positions 77 to 99 match the Nudix box motif; it reads GKADYFQETFESVARREAEEEIG. Residues Glu-93 and Glu-97 each coordinate Mg(2+).

Belongs to the Nudix hydrolase family. PCD1 subfamily. It depends on Mn(2+) as a cofactor. Requires Mg(2+) as cofactor. Post-translationally, the size of the cleaved transit peptide can be of 7 or 8 residues.

Its subcellular location is the peroxisome. It catalyses the reaction CoA + H2O = (R)-4'-phosphopantetheine + adenosine 3',5'-bisphosphate + 2 H(+). The enzyme catalyses CoA-disulfide + H2O = 4'-phosphopantetheinyl-CoA disulfide + adenosine 3',5'-bisphosphate + 2 H(+). The catalysed reaction is 8-oxo-dGTP + H2O = 8-oxo-dGMP + diphosphate + H(+). It carries out the reaction 2-oxo-dATP + H2O = 2-oxo-dAMP + diphosphate + H(+). In terms of biological role, diphosphatase (pyrophosphatase) with specificity for coenzyme A and CoA derivatives. Catalyzes the hydrolysis of the diphosphate linkage in CoA to give 3',5'-ADP and 4'-phosphopantetheine. Prefers oxidized CoA disulfide (CoASSCoA) over CoA as a substrate. May be required to remove potentially toxic oxidized CoA disulfide from peroxisomes to maintain the capacity for beta-oxidation of fatty acids. Can also hydrolyze 8-oxo-dGTP and 2-OH-dATP in vitro; therefore it may function as a sanitizing enzyme for oxidized nucleotides and may contribute to prevention of spontaneous mutagenesis due to the misincorporation of these oxidized nucleotides during DNA synthesis. Shows moderate activity in vitro with several short chain acyl-CoA esters and very low activity on 3'-dephospho-CoA while is not active with (deoxy)nucleoside 5'-triphosphates, nucleoside 5'-di- or monophosphates, diadenosine polyphosphates, nucleoside 5'-diphosphosugars, cytidine 5'-diphosphoalcohols, NAD(+), NADH, or FAD. The protein is Peroxisomal coenzyme A diphosphatase 1, peroxisomal (PCD1) of Saccharomyces cerevisiae (strain ATCC 204508 / S288c) (Baker's yeast).